The primary structure comprises 148 residues: FAD synthase (148 aa).

Residues 9–10 (TF), 14–17 (HPGH), N92, and Y119 contribute to the ATP site.

It belongs to the archaeal FAD synthase family. As to quaternary structure, homodimer. Requires a divalent metal cation as cofactor.

It carries out the reaction FMN + ATP + H(+) = FAD + diphosphate. The protein operates within cofactor biosynthesis; FAD biosynthesis; FAD from FMN: step 1/1. Catalyzes the transfer of the AMP portion of ATP to flavin mononucleotide (FMN) to produce flavin adenine dinucleotide (FAD) coenzyme. The protein is FAD synthase of Methanolacinia petrolearia (strain DSM 11571 / OCM 486 / SEBR 4847) (Methanoplanus petrolearius).